A 179-amino-acid chain; its full sequence is Small ribosomal subunit protein eS10x (179 aa).

Positions 90–179 are disordered; the sequence is TLKKSAKPGG…AAAPSGSGLP (90 aa). Residues 108–129 are compositionally biased toward basic and acidic residues; the sequence is DRSRGPRHEGGDRPRFGDRDGY. Residues 134-144 are compositionally biased toward gly residues; sequence RAGGEFGGEKG. Over residues 145–156 the composition is skewed to low complexity; it reads GAPADYQPSFQG. A compositionally biased stretch (gly residues) spans 157–167; it reads SGRGFGRGAGG. Residues 168–179 are compositionally biased toward low complexity; sequence YSAAAPSGSGLP.

The protein belongs to the eukaryotic ribosomal protein eS10 family.

Its subcellular location is the cytoplasm. This is Small ribosomal subunit protein eS10x (RPS10C) from Arabidopsis thaliana (Mouse-ear cress).